The following is a 386-amino-acid chain: RNA polymerase sigma factor SigA (386 aa).

Residues 154-224 are sigma-70 factor domain-2; the sequence is LAEANLRLVV…TRAIADQART (71 aa). The Interaction with polymerase core subunit RpoC signature appears at 178 to 181; that stretch reads DLIQ. The interval 233–309 is sigma-70 factor domain-3; it reads ETINKLIRVQ…DDVIESPVDY (77 aa). The interval 322–375 is sigma-70 factor domain-4; sequence VMDTLTDREENVLRMRFGLDDGRMHTLEDVGKQFKVTRERIRQIEAKAIKKLRH. The segment at residues 348-367 is a DNA-binding region (H-T-H motif); sequence LEDVGKQFKVTRERIRQIEA.

The protein belongs to the sigma-70 factor family. RpoD/SigA subfamily. In terms of assembly, interacts transiently with the RNA polymerase catalytic core.

It is found in the cytoplasm. Sigma factors are initiation factors that promote the attachment of RNA polymerase to specific initiation sites and are then released. This sigma factor is the primary sigma factor during exponential growth. The sequence is that of RNA polymerase sigma factor SigA from Lactococcus lactis subsp. lactis (strain IL1403) (Streptococcus lactis).